Here is a 201-residue protein sequence, read N- to C-terminus: Small ribosomal subunit protein uS4c (201 aa).

The 62-residue stretch at 89–150 (MRLDNILFRL…KERSKALIQN (62 aa)) folds into the S4 RNA-binding domain.

It belongs to the universal ribosomal protein uS4 family. In terms of assembly, part of the 30S ribosomal subunit. Contacts protein S5. The interaction surface between S4 and S5 is involved in control of translational fidelity.

The protein localises to the plastid. It is found in the chloroplast. One of the primary rRNA binding proteins, it binds directly to 16S rRNA where it nucleates assembly of the body of the 30S subunit. Functionally, with S5 and S12 plays an important role in translational accuracy. The polypeptide is Small ribosomal subunit protein uS4c (rps4) (Phalaenopsis aphrodite subsp. formosana (Moth orchid)).